The primary structure comprises 236 residues: Large ribosomal subunit protein uL1 (236 aa).

Belongs to the universal ribosomal protein uL1 family. As to quaternary structure, part of the 50S ribosomal subunit.

In terms of biological role, binds directly to 23S rRNA. The L1 stalk is quite mobile in the ribosome, and is involved in E site tRNA release. Protein L1 is also a translational repressor protein, it controls the translation of the L11 operon by binding to its mRNA. This Corynebacterium glutamicum (strain R) protein is Large ribosomal subunit protein uL1.